A 159-amino-acid chain; its full sequence is UPF0699 transmembrane protein YdbS (159 aa).

A run of 2 helical transmembrane segments spans residues 22-42 (IIIS…SYYF) and 47-67 (WISG…VFII).

This sequence belongs to the UPF0699 family.

It is found in the cell membrane. This is UPF0699 transmembrane protein YdbS (ydbS) from Bacillus subtilis (strain 168).